The primary structure comprises 359 residues: Membrane-bound lytic murein transglycosylase C (359 aa).

The signal sequence occupies residues 1–16; that stretch reads MKKYLALALIAPLLIS. Residue Cys-17 is the site of N-palmitoyl cysteine attachment. Cys-17 is lipidated: S-diacylglycerol cysteine.

Belongs to the transglycosylase Slt family.

It localises to the cell outer membrane. It catalyses the reaction Exolytic cleavage of the (1-&gt;4)-beta-glycosidic linkage between N-acetylmuramic acid (MurNAc) and N-acetylglucosamine (GlcNAc) residues in peptidoglycan, from either the reducing or the non-reducing ends of the peptidoglycan chains, with concomitant formation of a 1,6-anhydrobond in the MurNAc residue.. Functionally, murein-degrading enzyme. May play a role in recycling of muropeptides during cell elongation and/or cell division. The protein is Membrane-bound lytic murein transglycosylase C of Escherichia coli O139:H28 (strain E24377A / ETEC).